We begin with the raw amino-acid sequence, 267 residues long: Palmitoyltransferase ZDHHC12 (267 aa).

The Cytoplasmic segment spans residues 1–9 (MALWPPLNS). A helical transmembrane segment spans residues 10 to 30 (GMLVRTGHTVLTWGITLVLFL). The Lumenal portion of the chain corresponds to 31–43 (HDTELRQWEEQGE). A helical transmembrane segment spans residues 44-64 (LLLPLTFLLLVLSSLLLYLAV). At 65–140 (SLMDPGYVTT…ENCVGERNHP (76 aa)) the chain is on the cytoplasmic side. The region spanning 97-147 (RRCRHCLVLQPLRARHCRDCRRCVRRYDHHCPWMENCVGERNHPLFVAYLA) is the DHHC domain. Catalysis depends on Cys127, which acts as the S-palmitoyl cysteine intermediate. A helical transmembrane segment spans residues 141–161 (LFVAYLALQLVVLLWGLCLAW). Topologically, residues 162 to 178 (SGLQFFQPWGLWLRSTG) are lumenal. A helical transmembrane segment spans residues 179-199 (LLFTTFLLLSFFALVVALLLA). Residues 200–267 (SHLYLVARNT…EEEEGSSQVV (68 aa)) lie on the Cytoplasmic side of the membrane.

The protein belongs to the DHHC palmitoyltransferase family.

The protein resides in the golgi apparatus membrane. The protein localises to the endoplasmic reticulum membrane. It catalyses the reaction L-cysteinyl-[protein] + hexadecanoyl-CoA = S-hexadecanoyl-L-cysteinyl-[protein] + CoA. In terms of biological role, palmitoyltransferase that catalyzes the addition of palmitate onto various protein substrates. Has a palmitoyltransferase activity toward gephyrin/GPHN, regulating its clustering at synapses and its function in gamma-aminobutyric acid receptor clustering. Thereby, indirectly regulates GABAergic synaptic transmission. Negatively regulates NLRP3-driven inflammation. Catalyzes NLRP3 palmitoylation, leading to its degradation via the chaperone-mediated autophagy (CMA) process. The chain is Palmitoyltransferase ZDHHC12 from Mus musculus (Mouse).